A 309-amino-acid chain; its full sequence is Aspartate carbamoyltransferase catalytic subunit (309 aa).

The carbamoyl phosphate site is built by R58 and T59. K87 provides a ligand contact to L-aspartate. Carbamoyl phosphate contacts are provided by R108, H136, and Q139. 2 residues coordinate L-aspartate: R168 and R229. Carbamoyl phosphate-binding residues include L268 and P269.

The protein belongs to the aspartate/ornithine carbamoyltransferase superfamily. ATCase family. As to quaternary structure, heterooligomer of catalytic and regulatory chains.

The catalysed reaction is carbamoyl phosphate + L-aspartate = N-carbamoyl-L-aspartate + phosphate + H(+). The protein operates within pyrimidine metabolism; UMP biosynthesis via de novo pathway; (S)-dihydroorotate from bicarbonate: step 2/3. In terms of biological role, catalyzes the condensation of carbamoyl phosphate and aspartate to form carbamoyl aspartate and inorganic phosphate, the committed step in the de novo pyrimidine nucleotide biosynthesis pathway. In Methanosarcina mazei (strain ATCC BAA-159 / DSM 3647 / Goe1 / Go1 / JCM 11833 / OCM 88) (Methanosarcina frisia), this protein is Aspartate carbamoyltransferase catalytic subunit.